We begin with the raw amino-acid sequence, 189 residues long: MKSTFRPALVIFAMLTLICGVIYPYAITGIGKLVFPGQAEGSLVTQNGAAVGSSLIGQAFTSPQYFWGRPSATGPMPNNASASGGSNLGPTNPALLDAVKGRIDALKAADPGNTAAVPVDLVTASGSGLDPEISVAAAYYQMPRVARERKMAVEEVKAMIDRISQPQYMGFFGENRVNVLTLNLALDQR.

A helical transmembrane segment spans residues 10–30; that stretch reads VIFAMLTLICGVIYPYAITGI.

Belongs to the KdpC family. In terms of assembly, the system is composed of three essential subunits: KdpA, KdpB and KdpC.

The protein localises to the cell inner membrane. Part of the high-affinity ATP-driven potassium transport (or Kdp) system, which catalyzes the hydrolysis of ATP coupled with the electrogenic transport of potassium into the cytoplasm. This subunit acts as a catalytic chaperone that increases the ATP-binding affinity of the ATP-hydrolyzing subunit KdpB by the formation of a transient KdpB/KdpC/ATP ternary complex. This Janthinobacterium sp. (strain Marseille) (Minibacterium massiliensis) protein is Potassium-transporting ATPase KdpC subunit.